Reading from the N-terminus, the 376-residue chain is tRNA (guanine(26)-N(2))-dimethyltransferase (376 aa).

The Trm1 methyltransferase domain occupies 4–373; the sequence is VAVKEGLARI…APFGVVAEVM (370 aa). 5 residues coordinate S-adenosyl-L-methionine: Arg36, Arg61, Asp78, Asp120, and Ala121.

The protein belongs to the class I-like SAM-binding methyltransferase superfamily. Trm1 family.

The enzyme catalyses guanosine(26) in tRNA + 2 S-adenosyl-L-methionine = N(2)-dimethylguanosine(26) in tRNA + 2 S-adenosyl-L-homocysteine + 2 H(+). Dimethylates a single guanine residue at position 26 of a number of tRNAs using S-adenosyl-L-methionine as donor of the methyl groups. The chain is tRNA (guanine(26)-N(2))-dimethyltransferase from Thermococcus kodakarensis (strain ATCC BAA-918 / JCM 12380 / KOD1) (Pyrococcus kodakaraensis (strain KOD1)).